The primary structure comprises 423 residues: Serine hydroxymethyltransferase (423 aa).

(6S)-5,6,7,8-tetrahydrofolate is bound by residues Leu120 and 124 to 126 (GHL). The residue at position 229 (Lys229) is an N6-(pyridoxal phosphate)lysine. (6S)-5,6,7,8-tetrahydrofolate is bound at residue 353 to 355 (SPF).

It belongs to the SHMT family. In terms of assembly, homodimer. The cofactor is pyridoxal 5'-phosphate.

It is found in the cytoplasm. The catalysed reaction is (6R)-5,10-methylene-5,6,7,8-tetrahydrofolate + glycine + H2O = (6S)-5,6,7,8-tetrahydrofolate + L-serine. It participates in one-carbon metabolism; tetrahydrofolate interconversion. Its pathway is amino-acid biosynthesis; glycine biosynthesis; glycine from L-serine: step 1/1. Catalyzes the reversible interconversion of serine and glycine with tetrahydrofolate (THF) serving as the one-carbon carrier. This reaction serves as the major source of one-carbon groups required for the biosynthesis of purines, thymidylate, methionine, and other important biomolecules. Also exhibits THF-independent aldolase activity toward beta-hydroxyamino acids, producing glycine and aldehydes, via a retro-aldol mechanism. This chain is Serine hydroxymethyltransferase, found in Synechococcus sp. (strain RCC307).